Here is a 209-residue protein sequence, read N- to C-terminus: Glycolipid transfer protein A (209 aa).

2 consecutive repeat copies span residues 45–55 and 56–66. The interval 45 to 66 is 2 X 12 AA approximate tandem repeats; sequence IKADITGNITKIRSVYESNPTK. Residue 48–55 participates in beta-D-galactosyl-(1-&gt;4)-beta-D-glucosyl-(1&lt;-&gt;1)-N-[(9Z)-octadecenoyl]-sphing-4-enine binding; sequence DITGNITK. The beta-D-galactosyl-(1-&gt;4)-beta-D-glucosyl-(1&lt;-&gt;1)-N-[(9Z)-octadecenoyl]-sphing-4-enine site is built by His-140 and Tyr-207.

This sequence belongs to the GLTP family.

It is found in the cytoplasm. Functionally, accelerates the intermembrane transfer of various glycolipids. Catalyzes the transfer of various glycosphingolipids between membranes but does not catalyze the transfer of phospholipids. May be involved in the intracellular translocation of glucosylceramides. This Xenopus laevis (African clawed frog) protein is Glycolipid transfer protein A (gltp-a).